Consider the following 211-residue polypeptide: Protein-L-isoaspartate O-methyltransferase (211 aa).

Serine 62 is an active-site residue.

The protein belongs to the methyltransferase superfamily. L-isoaspartyl/D-aspartyl protein methyltransferase family.

Its subcellular location is the cytoplasm. The catalysed reaction is [protein]-L-isoaspartate + S-adenosyl-L-methionine = [protein]-L-isoaspartate alpha-methyl ester + S-adenosyl-L-homocysteine. Functionally, catalyzes the methyl esterification of L-isoaspartyl residues in peptides and proteins that result from spontaneous decomposition of normal L-aspartyl and L-asparaginyl residues. It plays a role in the repair and/or degradation of damaged proteins. In Shewanella woodyi (strain ATCC 51908 / MS32), this protein is Protein-L-isoaspartate O-methyltransferase.